We begin with the raw amino-acid sequence, 652 residues long: DNA ligase (652 aa).

NAD(+) is bound by residues 29–33 (DSDYD), 78–79 (SL), and Glu-107. The active-site N6-AMP-lysine intermediate is Lys-109. Residues Arg-130, Glu-164, Lys-278, and Lys-302 each contribute to the NAD(+) site. 4 residues coordinate Zn(2+): Cys-395, Cys-398, Cys-413, and Cys-418. The BRCT domain maps to 577–652 (NSDAALFGLT…IEDEDWLRKF (76 aa)).

Belongs to the NAD-dependent DNA ligase family. LigA subfamily. It depends on Mg(2+) as a cofactor. The cofactor is Mn(2+).

The enzyme catalyses NAD(+) + (deoxyribonucleotide)n-3'-hydroxyl + 5'-phospho-(deoxyribonucleotide)m = (deoxyribonucleotide)n+m + AMP + beta-nicotinamide D-nucleotide.. Functionally, DNA ligase that catalyzes the formation of phosphodiester linkages between 5'-phosphoryl and 3'-hydroxyl groups in double-stranded DNA using NAD as a coenzyme and as the energy source for the reaction. It is essential for DNA replication and repair of damaged DNA. The protein is DNA ligase of Streptococcus pyogenes serotype M6 (strain ATCC BAA-946 / MGAS10394).